A 406-amino-acid chain; its full sequence is Protein transport protein HofC homolog (406 aa).

The next 3 helical transmembrane spans lie at Met-167–Phe-187, Gln-214–Leu-234, and Met-379–Phe-399.

It belongs to the GSP F family.

The protein localises to the cell inner membrane. The polypeptide is Protein transport protein HofC homolog (hofC) (Haemophilus influenzae (strain ATCC 51907 / DSM 11121 / KW20 / Rd)).